We begin with the raw amino-acid sequence, 588 residues long: Sulfite reductase [NADPH] hemoprotein beta-component (588 aa).

Positions 442, 448, 487, and 491 each coordinate [4Fe-4S] cluster. C491 lines the siroheme pocket.

The protein belongs to the nitrite and sulfite reductase 4Fe-4S domain family. Alpha(8)-beta(8). The alpha component is a flavoprotein, the beta component is a hemoprotein. It depends on siroheme as a cofactor. [4Fe-4S] cluster is required as a cofactor.

The catalysed reaction is hydrogen sulfide + 3 NADP(+) + 3 H2O = sulfite + 3 NADPH + 4 H(+). It functions in the pathway sulfur metabolism; hydrogen sulfide biosynthesis; hydrogen sulfide from sulfite (NADPH route): step 1/1. Component of the sulfite reductase complex that catalyzes the 6-electron reduction of sulfite to sulfide. This is one of several activities required for the biosynthesis of L-cysteine from sulfate. This chain is Sulfite reductase [NADPH] hemoprotein beta-component, found in Actinobacillus pleuropneumoniae serotype 5b (strain L20).